The primary structure comprises 872 residues: Leucine-rich repeat-containing protein 66 (872 aa).

A helical membrane pass occupies residues phenylalanine 4–proline 24. N-linked (GlcNAc...) asparagine glycans are attached at residues asparagine 45 and asparagine 108. 5 LRR repeats span residues arginine 142–lysine 164, serine 165–glycine 186, glutamine 189–glycine 210, lysine 213–alanine 234, and histidine 239–glutamine 259. A disordered region spans residues leucine 339–aspartate 363. A compositionally biased stretch (basic and acidic residues) spans glutamate 349–aspartate 363. A helical membrane pass occupies residues leucine 371 to alanine 391. Polar residues predominate over residues glutamine 467 to glutamate 483. Disordered stretches follow at residues glutamine 467–serine 501, glycine 560–arginine 579, asparagine 695–isoleucine 761, and leucine 776–tryptophan 872. Asparagine 472 carries an N-linked (GlcNAc...) asparagine glycan. The segment covering glutamine 484–serine 493 has biased composition (basic and acidic residues). Position 718 is a phosphoserine (serine 718). 3 stretches are compositionally biased toward polar residues: residues serine 725 to proline 736, serine 746 to arginine 760, and cysteine 785 to proline 805. Serine 752 is modified (phosphoserine). The segment covering valine 831–glutamate 841 has biased composition (basic and acidic residues).

Its subcellular location is the membrane. This Mus musculus (Mouse) protein is Leucine-rich repeat-containing protein 66 (Lrrc66).